The sequence spans 253 residues: 5'/3'-nucleotidase SurE (253 aa).

Residues D8, D9, S39, and N92 each coordinate a divalent metal cation.

It belongs to the SurE nucleotidase family. Requires a divalent metal cation as cofactor.

It is found in the cytoplasm. It catalyses the reaction a ribonucleoside 5'-phosphate + H2O = a ribonucleoside + phosphate. The enzyme catalyses a ribonucleoside 3'-phosphate + H2O = a ribonucleoside + phosphate. The catalysed reaction is [phosphate](n) + H2O = [phosphate](n-1) + phosphate + H(+). In terms of biological role, nucleotidase with a broad substrate specificity as it can dephosphorylate various ribo- and deoxyribonucleoside 5'-monophosphates and ribonucleoside 3'-monophosphates with highest affinity to 3'-AMP. Also hydrolyzes polyphosphate (exopolyphosphatase activity) with the preference for short-chain-length substrates (P20-25). Might be involved in the regulation of dNTP and NTP pools, and in the turnover of 3'-mononucleotides produced by numerous intracellular RNases (T1, T2, and F) during the degradation of various RNAs. The protein is 5'/3'-nucleotidase SurE of Salmonella paratyphi B (strain ATCC BAA-1250 / SPB7).